A 382-amino-acid polypeptide reads, in one-letter code: RNA binding protein fox-1 homolog 1-like (382 aa).

Disordered regions lie at residues 34–79 and 94–148; these read QEAG…AAHP and GPQH…QPKR. Residues 49–65 show a composition bias toward pro residues; the sequence is YAPPPSYPPPGQAPPTP. The segment covering 101-110 has biased composition (polar residues); sequence ESITASNTDD. The RRM domain occupies 147–223; the sequence is KRLHVSNIPF…RKIEVNNATA (77 aa).

As to expression, expressed during muscle development in adaxial cells, somites, cardiac precursors, finbuds and jaw muscle cells.

Its subcellular location is the nucleus. In terms of biological role, RNA-binding protein that regulates alternative splicing events by binding to 5'-GCAUG-3' elements. Regulates alternative splicing of tissue-specific exons. This is RNA binding protein fox-1 homolog 1-like (rbfox1l) from Danio rerio (Zebrafish).